The chain runs to 733 residues: FYVE, RhoGEF and PH domain-containing protein 3 (733 aa).

Composition is skewed to polar residues over residues 1 to 11, 47 to 60, and 106 to 117; these read MELGRSSSTPQ, HSSS…STRE, and ETASDSRVPQDN. Residues 1-134 are disordered; the sequence is MELGRSSSTP…GVGEEPDPKV (134 aa). Positions 118 to 129 are enriched in acidic residues; that stretch reads PQEEEDSGVGEE. The residue at position 124 (S124) is a Phosphoserine. The DH domain occupies 153-337; sequence KLLHIAQELL…STAADHSNAA (185 aa). Residues 366-465 form the PH 1 domain; the sequence is ELIKEGSIQK…WIQVIQATVE (100 aa). Residues 481-535 form a disordered region; that stretch reads CSQDEEPTLSPDQPVMSTSSVEPAGVADSNGGTPGIESRKSSSKTRRDKEKPGCK. Basic and acidic residues predominate over residues 517–533; it reads ESRKSSSKTRRDKEKPG. The FYVE-type zinc-finger motif lies at 528–584; that stretch reads DKEKPGCKSCGETFNSITKRRYRCKLCGEVICRKCSEFKAENSKQSRVCRECFLEEP. Residues C534, C537, C551, C554, C559, C562, C576, and C579 each coordinate Zn(2+). 2 disordered regions span residues 586–612 and 712–733; these read VPPS…DPRP and GDTA…TDTP. Residues 612–711 enclose the PH 2 domain; that stretch reads PSLLCGTLNL…WLKALGTAVH (100 aa). Phosphothreonine is present on T732.

As to expression, detected in adult brain, spleen, lung and skeletal muscle. Detected in embryos from 7 dpc to 17 dpc.

The protein localises to the cytoplasm. The protein resides in the cytoskeleton. Its function is as follows. Promotes the formation of filopodia. May activate CDC42, a member of the Ras-like family of Rho- and Rac proteins, by exchanging bound GDP for free GTP. Plays a role in regulating the actin cytoskeleton and cell shape. In Mus musculus (Mouse), this protein is FYVE, RhoGEF and PH domain-containing protein 3 (Fgd3).